Consider the following 427-residue polypeptide: MHYFGVLAALSVFNIIACLTRGKPLENWKKLPVMEESDAFFHDPGEVEHDTHFDFKSFLENMKTDLLRSLNLSRVPSQVKTKEEPPQFMIDLYNRYTADKSSIPASNIVRSFSTEDVVSLISPEEHSFQKHILLFNISIPRYEEVTRAELRIFISCHKEVGSPSRLEGNMVIYDVLDGDHWENKESTKSLLVSHSIQDCGWEMFEVSSAVKRWVKADKMKTKNKLEVVIESKDLSGFPCGKLDITVTHDTKNLPLLIVFSNDRSNGTKETKVELREMIVHEQESVLNKLGKNDSSSEEEQREEKAIARPRQHSSRSKRSIGANHCRRTSLHVNFKEIGWDSWIIAPKDYEAFECKGGCFFPLTDNVTPTKHAIVQTLVHLQNPKKASKACCVPTKLDAISILYKDDAGVPTLIYNYEGMKVAECGCR.

The N-terminal stretch at 1 to 20 is a signal peptide; that stretch reads MHYFGVLAALSVFNIIACLT. The propeptide occupies 21-318; sequence RGKPLENWKK…PRQHSSRSKR (298 aa). Asparagine 71, asparagine 136, asparagine 265, and asparagine 292 each carry an N-linked (GlcNAc...) asparagine glycan. Residues 288-321 are disordered; that stretch reads KLGKNDSSSEEEQREEKAIARPRQHSSRSKRSIG. The segment covering 307-321 has biased composition (basic residues); sequence ARPRQHSSRSKRSIG. 3 cysteine pairs are disulfide-bonded: cysteine 325–cysteine 391, cysteine 354–cysteine 424, and cysteine 358–cysteine 426.

Belongs to the TGF-beta family. As to quaternary structure, homodimer; disulfide-linked. In terms of tissue distribution, expressed selectively in the dorsal neural tube. Lower levels seen in kidney and myotomal cells.

It is found in the secreted. Functionally, appears to regulate cell differentiation within the neural tube. May regulate the differentiation of cell types along the dorsoventral axis of the neural tube, acting in conjunction with distinct ventralizing signals from the notochord and floor plate. Controls the cell differentiation in the neural tube in several ways: (1) promotes the differentiation of cell types that derive from the dorsal neural tube. (2) ensures that the dorsal neural tube is refractory to ventralizing species from the notochord. (3) can diffuse and influence the fate of cells in more ventral regions of the neural tube. This is Dorsalin-1 (DSL1) from Gallus gallus (Chicken).